The primary structure comprises 104 residues: NADH dehydrogenase [ubiquinone] flavoprotein 3, mitochondrial (104 aa).

The N-terminal 35 residues, 1-35 (MAVSLLLRGGRIRALKAVLLEARVFPGELVSVVRL), are a transit peptide targeting the mitochondrion. Basic and acidic residues predominate over residues 38 to 50 (ESEKSAKEKELHP). The tract at residues 38 to 68 (ESEKSAKEKELHPKTQSVLKEPEPTDTTTYK) is disordered. Ser101 bears the Phosphoserine mark.

This sequence belongs to the complex I NDUFV3 subunit family. Complex I is composed of 45 different subunits. This is a component of the flavoprotein-sulfur (FP) fragment of the enzyme.

The protein resides in the mitochondrion inner membrane. Accessory subunit of the mitochondrial membrane respiratory chain NADH dehydrogenase (Complex I), that is believed not to be involved in catalysis. Complex I functions in the transfer of electrons from NADH to the respiratory chain. The immediate electron acceptor for the enzyme is believed to be ubiquinone. May be the terminally assembled subunit of Complex I. This chain is NADH dehydrogenase [ubiquinone] flavoprotein 3, mitochondrial (Ndufv3), found in Mus musculus (Mouse).